Reading from the N-terminus, the 599-residue chain is Glutamine--fructose-6-phosphate aminotransferase [isomerizing] (599 aa).

The active-site Nucleophile; for GATase activity is Cys-2. Positions 2–223 constitute a Glutamine amidotransferase type-2 domain; the sequence is CGIIGYIGNE…DRDIVILRKE (222 aa). SIS domains lie at 286 to 423 and 452 to 589; these read LGKE…IIGK and IAEE…VDKP. Lys-594 (for Fru-6P isomerization activity) is an active-site residue.

In terms of assembly, homodimer.

It is found in the cytoplasm. The catalysed reaction is D-fructose 6-phosphate + L-glutamine = D-glucosamine 6-phosphate + L-glutamate. Catalyzes the first step in hexosamine metabolism, converting fructose-6P into glucosamine-6P using glutamine as a nitrogen source. This is Glutamine--fructose-6-phosphate aminotransferase [isomerizing] (glmS) from Methanococcus maripaludis (strain DSM 14266 / JCM 13030 / NBRC 101832 / S2 / LL).